The chain runs to 482 residues: Aspartic proteinase 36 (482 aa).

The first 27 residues, 1–27 (MVTTMDPSRISRIVAVVFVLVIQVVSG), serve as a signal peptide directing secretion. N32 carries an N-linked (GlcNAc...) asparagine glycan. The region spanning 78-429 (YFTKIKLGSP…DLENEVIGWA (352 aa)) is the Peptidase A1 domain. D96 is a catalytic residue. N-linked (GlcNAc...) asparagine glycans are attached at residues N178, N204, and N226. D310 is an active-site residue. A disulfide bond links C347 and C388. N432 carries an N-linked (GlcNAc...) asparagine glycan. A lipid anchor (GPI-anchor amidated serine) is attached at S456. Residues 457–482 (AASSVMNGTLVTLLSILIWVFHSFTS) constitute a propeptide, removed in mature form. Residue N463 is glycosylated (N-linked (GlcNAc...) asparagine).

Belongs to the peptidase A1 family. Highly expressed in pollen and pollen tubes. Mostly expressed in roots, flowers and inflorescence, and at lower levels in stems, seedlings and siliques.

It is found in the cell membrane. The protein localises to the cytoplasm. Its subcellular location is the cytosol. Displays aspartic proteolytic activity. Together with A39, contributes to pollen and ovule development, including the apical cell wall constitution of the growing pollen tubes. The sequence is that of Aspartic proteinase 36 from Arabidopsis thaliana (Mouse-ear cress).